The sequence spans 336 residues: 3-isopropylmalate dehydrogenase (336 aa).

Substrate is bound by residues R87, R97, R121, and D211. Mg(2+) is bound by residues D211, D235, and D239. An NAD(+)-binding site is contributed by 271 to 283 (GSAPDIAGQGIAD).

The protein belongs to the isocitrate and isopropylmalate dehydrogenases family. LeuB type 2 subfamily. Homodimer. Requires Mg(2+) as cofactor. Mn(2+) serves as cofactor.

The protein resides in the cytoplasm. The enzyme catalyses (2R,3S)-3-isopropylmalate + NAD(+) = 4-methyl-2-oxopentanoate + CO2 + NADH. Its pathway is amino-acid biosynthesis; L-leucine biosynthesis; L-leucine from 3-methyl-2-oxobutanoate: step 3/4. Its function is as follows. Catalyzes the oxidation of 3-carboxy-2-hydroxy-4-methylpentanoate (3-isopropylmalate) to 3-carboxy-4-methyl-2-oxopentanoate. The product decarboxylates to 4-methyl-2 oxopentanoate. This Mycobacterium bovis (strain ATCC BAA-935 / AF2122/97) protein is 3-isopropylmalate dehydrogenase.